The following is a 206-amino-acid chain: MRLSLRHITWLKIAIWLAATLPLLWLVLSINLGGLSADPAKDIQHFTGRMALKLLLATLLVSPLARYSKQPLLLRCRRLLGLWCFAWGTLHLLSYSILELGLSNIGLLGHELINRPYLTLGIISWLVLLALALTSTRWAQRKMGARWQKLHNWVYVVAILAPIHYLWSVKTLSPWPIIYAVMAALLLLLRYKLLLPRYKKFRQWFR.

5 helical membrane-spanning segments follow: residues 13–33, 79–99, 116–136, 147–167, and 169–189; these read IAIWLAATLPLLWLVLSINLG, LLGLWCFAWGTLHLLSYSILE, PYLTLGIISWLVLLALALTST, WQKLHNWVYVVAILAPIHYLW, and VKTLSPWPIIYAVMAALLLLL.

It belongs to the MsrQ family. As to quaternary structure, heterodimer of a catalytic subunit (MsrP) and a heme-binding subunit (MsrQ). It depends on FMN as a cofactor. Heme b serves as cofactor.

It localises to the cell inner membrane. In terms of biological role, part of the MsrPQ system that repairs oxidized periplasmic proteins containing methionine sulfoxide residues (Met-O), using respiratory chain electrons. Thus protects these proteins from oxidative-stress damage caused by reactive species of oxygen and chlorine generated by the host defense mechanisms. MsrPQ is essential for the maintenance of envelope integrity under bleach stress, rescuing a wide series of structurally unrelated periplasmic proteins from methionine oxidation. MsrQ provides electrons for reduction to the reductase catalytic subunit MsrP, using the quinone pool of the respiratory chain. This is Protein-methionine-sulfoxide reductase heme-binding subunit MsrQ from Yersinia pestis bv. Antiqua (strain Antiqua).